We begin with the raw amino-acid sequence, 377 residues long: Probable glucokinase 2 (377 aa).

An ATP-binding site is contributed by 27–32; it reads CDVGGS.

This sequence belongs to the bacterial glucokinase family.

The catalysed reaction is D-glucose + ATP = D-glucose 6-phosphate + ADP + H(+). The chain is Probable glucokinase 2 (GK2) from Trichomonas vaginalis.